The primary structure comprises 163 residues: Cyanate hydratase (163 aa).

Residues R103, E106, and S129 contribute to the active site.

Belongs to the cyanase family.

It catalyses the reaction cyanate + hydrogencarbonate + 3 H(+) = NH4(+) + 2 CO2. Catalyzes the reaction of cyanate with bicarbonate to produce ammonia and carbon dioxide. This Ajellomyces dermatitidis (strain ER-3 / ATCC MYA-2586) (Blastomyces dermatitidis) protein is Cyanate hydratase.